The chain runs to 397 residues: Iron-sulfur cluster assembly SufBD family protein Rv1462 (397 aa).

Position 2 is an N-acetylthreonine (Thr2).

Belongs to the iron-sulfur cluster assembly SufBD family.

This is Iron-sulfur cluster assembly SufBD family protein Rv1462 from Mycobacterium tuberculosis (strain ATCC 25618 / H37Rv).